The sequence spans 103 residues: N(4)-acetylcytidine amidohydrolase (103 aa).

The 96-residue stretch at 6–101 (ITFFQRFQDD…QTQFYVIEFK (96 aa)) folds into the ASCH domain. Lys21 (proton acceptor) is an active-site residue. Catalysis depends on Thr24, which acts as the Nucleophile. The Proton donor role is filled by Glu74.

Belongs to the N(4)-acetylcytidine amidohydrolase family.

It catalyses the reaction N(4)-acetylcytidine + H2O = cytidine + acetate + H(+). The enzyme catalyses N(4)-acetyl-2'-deoxycytidine + H2O = 2'-deoxycytidine + acetate + H(+). It carries out the reaction N(4)-acetylcytosine + H2O = cytosine + acetate + H(+). Its function is as follows. Catalyzes the hydrolysis of N(4)-acetylcytidine (ac4C). This chain is N(4)-acetylcytidine amidohydrolase (yqfB), found in Escherichia coli (strain K12 / MC4100 / BW2952).